The primary structure comprises 731 residues: Cucumisin (731 aa).

The first 22 residues, 1 to 22 (MSSSLIFKLFFFSLFFSNRLAS), serve as a signal peptide directing secretion. A propeptide spans 23 to 110 (RLDSDDDGKN…VFLNEMNELH (88 aa)) (activation peptide). In terms of domain architecture, Inhibitor I9 spans 34-110 (YIVYMGRKLE…VFLNEMNELH (77 aa)). The 471-residue stretch at 114–584 (SWDFLGFPLT…SGHVNPLKAV (471 aa)) folds into the Peptidase S8 domain. The Charge relay system role is filled by Asp-140. Cys-166 and Cys-174 are joined by a disulfide. The active-site Charge relay system is the His-204. Cystine bridges form between Cys-245/Cys-250 and Cys-380/Cys-397. Asn-466 is a glycosylation site (N-linked (GlcNAc...) asparagine). The active-site Charge relay system is the Ser-525. Positions 616–731 (GDYSACTSGN…RSPITITSLV (116 aa)) are excised as a propeptide. N-linked (GlcNAc...) asparagine glycosylation is present at Asn-652.

The protein belongs to the peptidase S8 family. As to quaternary structure, monomer and dimer. In terms of processing, the C-terminal propeptide is autocleaved. Specifically expressed in fruits. Expressed in sarcocarp (at protein level).

The protein resides in the secreted. The catalysed reaction is Hydrolysis of proteins with broad specificity.. In Cucumis melo (Muskmelon), this protein is Cucumisin.